A 674-amino-acid chain; its full sequence is Primary amine oxidase (674 aa).

Positions 1–25 are cleaved as a signal peptide; that stretch reads MASTTTMRLALFSVLTLLSFHAVVS. N-linked (GlcNAc...) asparagine glycosylation occurs at Asn156. Cysteines 162 and 183 form a disulfide. The span at 226-236 shows a compositional bias: polar residues; the sequence is ENTEYQVSKQS. A disordered region spans residues 226 to 251; the sequence is ENTEYQVSKQSPPFGPKQHSLTSHQP. Residue 323-334 coordinates substrate; the sequence is FFDSGEFGFGLS. The Proton acceptor role is filled by Asp325. The cysteines at positions 344 and 370 are disulfide-linked. An N-linked (GlcNAc...) asparagine glycan is attached at Asn389. 409–414 provides a ligand contact to substrate; the sequence is VGNYDN. The active-site Schiff-base intermediate with substrate; via topaquinone is Tyr412. Tyr412 is subject to 2',4',5'-topaquinone. Cu cation-binding residues include His467 and His469. Mn(2+)-binding residues include Asp476, Phe477, Asp478, Asp617, and Ile618. Position 628 (His628) interacts with Cu cation.

Belongs to the copper/topaquinone oxidase family. Homodimer. The cofactor is Cu cation. Requires Mn(2+) as cofactor. It depends on L-topaquinone as a cofactor. In terms of processing, topaquinone (TPQ) is generated by copper-dependent autoxidation of a specific tyrosyl residue.

It catalyses the reaction a primary methyl amine + O2 + H2O = an aldehyde + H2O2 + NH4(+). The chain is Primary amine oxidase from Pisum sativum (Garden pea).